Consider the following 426-residue polypeptide: Glutamyl-tRNA reductase (426 aa).

Substrate-binding positions include Thr-49–Arg-52, Ser-109, Glu-114–Gln-116, and Gln-120. Cys-50 (nucleophile) is an active-site residue. Gly-189–Gly-194 is a binding site for NADP(+).

This sequence belongs to the glutamyl-tRNA reductase family. Homodimer.

The enzyme catalyses (S)-4-amino-5-oxopentanoate + tRNA(Glu) + NADP(+) = L-glutamyl-tRNA(Glu) + NADPH + H(+). Its pathway is porphyrin-containing compound metabolism; protoporphyrin-IX biosynthesis; 5-aminolevulinate from L-glutamyl-tRNA(Glu): step 1/2. It participates in porphyrin-containing compound metabolism; chlorophyll biosynthesis. Its function is as follows. Catalyzes the NADPH-dependent reduction of glutamyl-tRNA(Glu) to glutamate 1-semialdehyde (GSA). This Chlorobium chlorochromatii (strain CaD3) protein is Glutamyl-tRNA reductase.